A 421-amino-acid polypeptide reads, in one-letter code: U-box domain-containing protein 25 (421 aa).

The region spanning 13 to 88 (QIPYHFRCPI…QEWCVANRSN (76 aa)) is the U-box domain.

The enzyme catalyses S-ubiquitinyl-[E2 ubiquitin-conjugating enzyme]-L-cysteine + [acceptor protein]-L-lysine = [E2 ubiquitin-conjugating enzyme]-L-cysteine + N(6)-ubiquitinyl-[acceptor protein]-L-lysine.. Its pathway is protein modification; protein ubiquitination. In terms of biological role, functions as an E3 ubiquitin ligase. The sequence is that of U-box domain-containing protein 25 (PUB25) from Arabidopsis thaliana (Mouse-ear cress).